The primary structure comprises 617 residues: Electron transfer flavoprotein-ubiquinone oxidoreductase, mitochondrial (617 aa).

The transit peptide at 1-33 (MLVPLAKLSCLAYQCFHALKIKKNYLPLCATRW) directs the protein to the mitochondrion. FAD is bound at residue 71–85 (VVIVGAGPAGLSAAV). Lysine 96 is modified (N6-acetyllysine). Residues 109–130 (IGAHTLSGACLDPGAFKELFPD) lie within the membrane without spanning it. Lysine 132 and lysine 223 each carry N6-acetyllysine. A ubiquinone contacts are provided by glycine 305 and glycine 306. Residue lysine 357 is modified to N6-acetyllysine. Residues 428 to 447 (IGLHVTEYEDNLKNSWVWKE) lie within the membrane without spanning it. Serine 551 carries the post-translational modification Phosphoserine. Residues cysteine 561, cysteine 586, cysteine 589, and cysteine 592 each coordinate [4Fe-4S] cluster. In terms of domain architecture, 4Fe-4S ferredoxin-type spans 577–606 (FRLQINAQNCVHCKTCDIKDPSQNINWVVP).

It belongs to the ETF-QO/FixC family. In terms of assembly, monomer. It depends on [4Fe-4S] cluster as a cofactor. The cofactor is FAD.

It localises to the mitochondrion inner membrane. It catalyses the reaction a ubiquinone + reduced [electron-transfer flavoprotein] = a ubiquinol + oxidized [electron-transfer flavoprotein] + H(+). Accepts electrons from ETF and reduces ubiquinone. The sequence is that of Electron transfer flavoprotein-ubiquinone oxidoreductase, mitochondrial from Homo sapiens (Human).